The sequence spans 230 residues: N-(5'-phosphoribosyl)anthranilate isomerase (230 aa).

Belongs to the TrpF family.

The catalysed reaction is N-(5-phospho-beta-D-ribosyl)anthranilate = 1-(2-carboxyphenylamino)-1-deoxy-D-ribulose 5-phosphate. It functions in the pathway amino-acid biosynthesis; L-tryptophan biosynthesis; L-tryptophan from chorismate: step 3/5. The sequence is that of N-(5'-phosphoribosyl)anthranilate isomerase from Thermosynechococcus vestitus (strain NIES-2133 / IAM M-273 / BP-1).